A 457-amino-acid chain; its full sequence is MSGITLTKLTQERISIPNNNVITNGVENNIDSDTLSGTLTHLMEEHRTRVGAVTGPEAATTSTDGLISNGAERLRLQGSRLQTSRFACFRCCGNIITYLVRLRSTPEELEQRYKSKEIDKFLEKEKHTFRRQVKLLLLGAGESGKSTFLKQMRIIHGVNFDYELLLEYQSVIYQNVIRGMQVLLDAREKLNIAWGSDGREQDAYDAKLMECNSLDVPKFMEYAPPISRLWQDRGIRRAFERRREFQISDSVSYFLDEIQRLATPDYVPTHKDILHCRKATKGVYEFCVKVQNIPFVFVDVGGQRTQRQKWTRCFDSSVTSIIFLVSSSEFDQVLAEDRKTNRLEESKNIFDTIVNNATFKGISIILFLNKTDLLEQKVCNPETDIRWYYPHFNGNPHSVLDVQNFILQMFMSVRRSSSISRIYHHFTTAIDTRNINVVFNSVKDTILQRNLNALMLQ.

Residues 131–457 (RQVKLLLLGA…QRNLNALMLQ (327 aa)) form the G-alpha domain. The tract at residues 134–147 (KLLLLGAGESGKST) is G1 motif. GTP-binding positions include 139–146 (GAGESGKS), 274–280 (LHCRKAT), 299–303 (DVGGQ), 369–372 (NKTD), and A429. Residues S146 and T280 each coordinate Mg(2+). The segment at 272–280 (DILHCRKAT) is G2 motif. Residues 295–304 (FVFVDVGGQR) form a G3 motif region. Residues 365–372 (ILFLNKTD) are G4 motif. The segment at 427–432 (TTAIDT) is G5 motif.

This sequence belongs to the G-alpha family. G(12) subfamily. As to quaternary structure, g proteins are composed of 3 units; alpha, beta and gamma. The alpha chain contains the guanine nucleotide binding site. In terms of tissue distribution, in ovary, expressed in nurse cells and oocyte. In early embryos, distributed uniformly. At the extended germband stage, accumulates in the mesoderm.

Its subcellular location is the cytoplasm. Functionally, may play a role in a signal transduction pathway used during gastrulation. Required specifically for the ventral furrow and posterior midgut invaginations, where it is necessary for coordinating cell shape changes. In terms of biological role, guanine nucleotide-binding proteins (G proteins) are involved as modulators or transducers in various transmembrane signaling systems. The sequence is that of Guanine nucleotide-binding protein subunit alpha homolog (cta) from Drosophila melanogaster (Fruit fly).